A 614-amino-acid polypeptide reads, in one-letter code: DBH-like monooxygenase protein 1 homolog (614 aa).

An N-terminal signal peptide occupies residues 1-22 (MSENKLFCAIVFLTSLFCSTCS). The Lumenal portion of the chain corresponds to 23 to 593 (QGTRFVHSAA…CRKDSAIQCE (571 aa)). Residues 37–150 (RRYNIKWGFD…STVRVIWAFH (114 aa)) enclose the DOMON domain. An N-linked (GlcNAc...) asparagine glycan is attached at Asn116. The active site involves Tyr205. 2 disulfides stabilise this stretch: Cys207/Cys259 and Cys244/Cys271. 2 residues coordinate Cu cation: His237 and His238. Asn249 is a glycosylation site (N-linked (GlcNAc...) asparagine). Cu cation contacts are provided by His309, His391, and His393. Disulfide bonds link Cys366/Cys482, Cys370/Cys552, and Cys445/Cys467. His391 is an active-site residue. An N-linked (GlcNAc...) asparagine glycan is attached at Asn454. Residue Met466 participates in Cu cation binding. Asn519 is a glycosylation site (N-linked (GlcNAc...) asparagine). A helical transmembrane segment spans residues 594-612 (HSLALLLTACLLLILQTCL).

Belongs to the copper type II ascorbate-dependent monooxygenase family. Cu(2+) is required as a cofactor.

It localises to the endoplasmic reticulum membrane. The polypeptide is DBH-like monooxygenase protein 1 homolog (moxd1) (Danio rerio (Zebrafish)).